Consider the following 883-residue polypeptide: Alanine--tRNA ligase (883 aa).

Zn(2+)-binding residues include His-565, His-569, Cys-675, and His-679.

Belongs to the class-II aminoacyl-tRNA synthetase family. The cofactor is Zn(2+).

The protein resides in the cytoplasm. It carries out the reaction tRNA(Ala) + L-alanine + ATP = L-alanyl-tRNA(Ala) + AMP + diphosphate. Catalyzes the attachment of alanine to tRNA(Ala) in a two-step reaction: alanine is first activated by ATP to form Ala-AMP and then transferred to the acceptor end of tRNA(Ala). Also edits incorrectly charged Ser-tRNA(Ala) and Gly-tRNA(Ala) via its editing domain. This chain is Alanine--tRNA ligase, found in Rhodospirillum rubrum (strain ATCC 11170 / ATH 1.1.1 / DSM 467 / LMG 4362 / NCIMB 8255 / S1).